A 322-amino-acid polypeptide reads, in one-letter code: Malate dehydrogenase (322 aa).

NAD(+) is bound by residues 10-15 (GSGQIG) and Asp34. Positions 83 and 89 each coordinate substrate. NAD(+)-binding positions include Asn96 and 119-121 (ITN). Substrate-binding residues include Asn121 and Arg152. His176 acts as the Proton acceptor in catalysis.

It belongs to the LDH/MDH superfamily. MDH type 3 family.

It carries out the reaction (S)-malate + NAD(+) = oxaloacetate + NADH + H(+). In terms of biological role, catalyzes the reversible oxidation of malate to oxaloacetate. This chain is Malate dehydrogenase, found in Nitrobacter hamburgensis (strain DSM 10229 / NCIMB 13809 / X14).